Consider the following 477-residue polypeptide: Lactate utilization protein B (477 aa).

4Fe-4S ferredoxin-type domains lie at 304-334 (GTQF…GHSY) and 353-382 (YDTY…LHDL). The [4Fe-4S] cluster site is built by Cys313, Cys316, Cys319, Cys323, Cys366, Cys369, and Cys373. A disordered region spans residues 443–463 (GPKPLQAWTNSRDFPMPDDEN).

It belongs to the LutB/YkgF family.

Is involved in L-lactate degradation and allows cells to grow with lactate as the sole carbon source. Has probably a role as an electron transporter during oxidation of L-lactate. The polypeptide is Lactate utilization protein B (Macrococcus caseolyticus (strain JCSC5402) (Macrococcoides caseolyticum)).